A 255-amino-acid chain; its full sequence is Putative cysteine-rich repeat secretory protein 27 (255 aa).

The signal sequence occupies residues methionine 1–serine 26. Gnk2-homologous domains follow at residues tyrosine 33–serine 135 and tyrosine 141–phenylalanine 252.

This sequence belongs to the cysteine-rich repeat secretory protein family.

The protein localises to the secreted. The polypeptide is Putative cysteine-rich repeat secretory protein 27 (CRRSP27) (Arabidopsis thaliana (Mouse-ear cress)).